A 211-amino-acid chain; its full sequence is Endonuclease III (211 aa).

One can recognise a HhH domain in the interval 108 to 127 (REALEALAGVGRKTANVVLN). Residues C187, C194, C197, and C203 each coordinate [4Fe-4S] cluster.

Belongs to the Nth/MutY family. The cofactor is [4Fe-4S] cluster.

The enzyme catalyses 2'-deoxyribonucleotide-(2'-deoxyribose 5'-phosphate)-2'-deoxyribonucleotide-DNA = a 3'-end 2'-deoxyribonucleotide-(2,3-dehydro-2,3-deoxyribose 5'-phosphate)-DNA + a 5'-end 5'-phospho-2'-deoxyribonucleoside-DNA + H(+). Functionally, DNA repair enzyme that has both DNA N-glycosylase activity and AP-lyase activity. The DNA N-glycosylase activity releases various damaged pyrimidines from DNA by cleaving the N-glycosidic bond, leaving an AP (apurinic/apyrimidinic) site. The AP-lyase activity cleaves the phosphodiester bond 3' to the AP site by a beta-elimination, leaving a 3'-terminal unsaturated sugar and a product with a terminal 5'-phosphate. The sequence is that of Endonuclease III from Haemophilus influenzae (strain ATCC 51907 / DSM 11121 / KW20 / Rd).